The sequence spans 126 residues: RutC family protein PH0854 (126 aa).

Belongs to the RutC family.

The polypeptide is RutC family protein PH0854 (Pyrococcus horikoshii (strain ATCC 700860 / DSM 12428 / JCM 9974 / NBRC 100139 / OT-3)).